Reading from the N-terminus, the 1001-residue chain is MTTKNNKQLKSVLFMFLLLIGAYVKAQEKNVSGTVTSSEDGMMLPGVNIIVKGTASGTTSDFDGNYNIEVPDSNAILQFNYLGFVTQEIKVGAQTNISVVLQVDQNELEEIVVIGYGTVKKSDVSGSVSSVKSAELTAYPTVSAEQALQGRAAGVQVQSNNGGEPGAPIKVRIRGGTSINASSDALIVVDGFVGASMPAPQDIASMEVLKDASATAIYGSRGANGVIMVTTKKGTSSKPTLELNTSYSLQHVNNTIDLLDADEFATYRQAYSENYVQGPANTDWQDEIYTTGSISNTQLAFSGGSDNSKYYISGNYFAQDGVVINSNLERFTILSNVDVDITKRFKVGLNVFGGRSTKDGVSTQAQTGGTGGGDVISSAYRFAPDLGIYNADGTYTINSLGDDIDNPYALATESVDERKADTYRANFYAAYEFIDGLEFKTTFGFSSENTQIGKFKPTTILAGAGVGGEATFEYRNTTNTLSENYLTYNKSFGAHNLSLLGGYSYQKVQNEGAFAGARSFVTNEVSYRNLEGGAVTMQPSSYLNETELVSVFGRVNYEYASKYIFTFTARRDGSSNFSKNNKYAFFPSGAIAWNMAKENFLKDSNTITTWKWRASYGATGNPSISPYETLAKFSSVYAVVGDQQVNGVVLTDFANDNLKWETSKQLDLGLDVALFDNRLELSFDYYTIKTEDLLFPRPLPEYSGVSSQIQNIGELENKGYEFSINSRNITNQDFTWSTAFNFSRNKNKMVKLPDGDDLFIDSAPGHFLQRQTQILREGEAIGSFYGYEYKGVYQGGNFPEGTATLSGDSDPGGELFADLDGNGEISTADRKIIGDPTPDFTMGFNNDLRYKNFDMNLFFQASVGGEILNYTLLELGSGAANSTADMVNAWSPTNTNTDVPRPAVREKRITSRYVYDGSYVRLKNLSFGYNLPESFLGKTGLQTVRLYVSGQNLLTFTDYPGADPEANYRNDNNQRSNTNIGLDYGSYPNVRTFTMGLNMKF.

The first 26 residues, 1-26, serve as a signal peptide directing secretion; sequence MTTKNNKQLKSVLFMFLLLIGAYVKA. Residues 109–116 carry the TonB box motif; the sequence is EEIVVIGY. Residues 120 to 232 form the TBDR plug domain; it reads KKSDVSGSVS…ANGVIMVTTK (113 aa). The TBDR beta-barrel domain maps to 238–1001; that stretch reads KPTLELNTSY…TFTMGLNMKF (764 aa). The TonB C-terminal box motif lies at 984-1001; the sequence is YGSYPNVRTFTMGLNMKF.

This sequence belongs to the TonB-dependent receptor family.

The protein localises to the cell outer membrane. TonB-dependent receptor probably involved in ulvan degradation. Ulvan is the main polysaccharide component of the Ulvales (green seaweed) cell wall. It is composed of disaccharide building blocks comprising 3-sulfated rhamnose (Rha3S) linked to D-glucuronic acid (GlcA), L-iduronic acid (IduA), or D-xylose (Xyl). The TonB-dependent receptor may mediate transport of ulvan oligosaccharides from the surface of the outer membrane to the periplasm for subsequent degradation. This Formosa agariphila (strain DSM 15362 / KCTC 12365 / LMG 23005 / KMM 3901 / M-2Alg 35-1) protein is TonB-dependent receptor P3.